The sequence spans 302 residues: MTPGLIVICGPTATGKSSLALALARRLGAPILSADSRQVYRGFDIGTAKPSVTDQEDVPHYLIDICDPTETLTVADYQEQAQALIAQFHTEGQTPILVGGTGLYIRAIVEGLKIPRVPPQLELRSQLQSQGQVQIYQWLQQVDPPAAQKIHAHDQVRTLRALEVFYTTGIPLSAQQGKNPPSYPILQIGLDISDLDQHTDIIQQRTAAMVEQGWLTEVQKLIDHYGVELPLLATLGYQEMKAYLHQQITLEEATAQTILHTRQFAKRQRTWFRANSGIHWFDATNSDLLSLVWKDIQGQPWL.

Residue 10–17 (GPTATGKS) coordinates ATP. 12–17 (TATGKS) contributes to the substrate binding site. Positions 35–38 (DSRQ) are interaction with substrate tRNA.

The protein belongs to the IPP transferase family. As to quaternary structure, monomer. Requires Mg(2+) as cofactor.

It catalyses the reaction adenosine(37) in tRNA + dimethylallyl diphosphate = N(6)-dimethylallyladenosine(37) in tRNA + diphosphate. In terms of biological role, catalyzes the transfer of a dimethylallyl group onto the adenine at position 37 in tRNAs that read codons beginning with uridine, leading to the formation of N6-(dimethylallyl)adenosine (i(6)A). The sequence is that of tRNA dimethylallyltransferase from Acaryochloris marina (strain MBIC 11017).